The sequence spans 102 residues: MSIYVGNLSYEVTQDTLSAVFAEYGTVKRVQLPTDRETGQPRGFGFVEMGSEAEEAAAIEALDGAEWMGRDLKVNKAKPREDRGPSGGNRGGYGGGGGRNRY.

Residues Ser2–Pro79 form the RRM domain. Residues Lys73–Gly84 are compositionally biased toward basic and acidic residues. The interval Lys73–Tyr102 is disordered. The span at Pro85 to Tyr102 shows a compositional bias: gly residues.

The protein is Putative RNA-binding protein RbpA (rbpA) of Nostoc sp. (strain PCC 7120 / SAG 25.82 / UTEX 2576).